Reading from the N-terminus, the 591-residue chain is MAHQSWSVLDAPNPTYLWTQLLVEELVRNGVHTFFVAPGSRSTPLTVAIARHPEAESVLHVDERGAAFAALGVGRAARGPAAWVTTSGTAVANGLPAAVEASVDGVPMLLLTADRPPELRDTGANQTIDQVKIFGDYVRWQADVPPPSDEVDPAYVLTTADQALHQTLRAPAGPVHVNCMFRKPLEPVETEASVAVPTAVDAWARGTEPYTHYPTPAPSPPGPEVDALAETVRGTEHGLVVAGRLDSAAAADATRRLATHLGWPLIPDLTSRLRRGGREQPEQVPYGDLVLTSAAFREGHPPRAVLQVGGRFASKRLRLFLRDSAPEVWAVVRPDPSRIDPDHRVTHHVEAAVPAAVDALVARLEEGPRGTTWRDDWAGASERVGAVVQAHVQESDALTDPLVAALLTEEMPSEHALVAASSMPVRDLNRHAAPGGTGGPAFANRGASGIDGTVATAAGIAEGRDGPVTLLIGDLALQHDLNGLALLQDRPVVAIVVNNDGGGIFHFLPIRKHDEFDPYFTTPHGHDFEHAAALFDLPYHRPDSPSALRSAYAQACRSGESALIEVRTDRATNRQVHDRLEASVERAVEEG.

Belongs to the TPP enzyme family. MenD subfamily. In terms of assembly, homodimer. Mg(2+) is required as a cofactor. It depends on Mn(2+) as a cofactor. The cofactor is thiamine diphosphate.

It catalyses the reaction isochorismate + 2-oxoglutarate + H(+) = 5-enolpyruvoyl-6-hydroxy-2-succinyl-cyclohex-3-ene-1-carboxylate + CO2. It participates in quinol/quinone metabolism; 1,4-dihydroxy-2-naphthoate biosynthesis; 1,4-dihydroxy-2-naphthoate from chorismate: step 2/7. It functions in the pathway quinol/quinone metabolism; menaquinone biosynthesis. In terms of biological role, catalyzes the thiamine diphosphate-dependent decarboxylation of 2-oxoglutarate and the subsequent addition of the resulting succinic semialdehyde-thiamine pyrophosphate anion to isochorismate to yield 2-succinyl-5-enolpyruvyl-6-hydroxy-3-cyclohexene-1-carboxylate (SEPHCHC). The chain is 2-succinyl-5-enolpyruvyl-6-hydroxy-3-cyclohexene-1-carboxylate synthase from Salinibacter ruber (strain DSM 13855 / M31).